The following is a 285-amino-acid chain: UPF0014 membrane protein STAR2 (285 aa).

The next 7 helical transmembrane spans lie at 30–50 (FLVG…AVAL), 64–84 (YAMA…QFIF), 88–108 (SAAW…YTAG), 119–139 (HIAA…LVAL), 148–168 (YIIP…GVTM), 203–225 (SLVI…ALPG), and 240–262 (AIQL…SILS).

Belongs to the UPF0014 family. Interacts with STAR2. Expressed in roots.

Its subcellular location is the membrane. Functionally, associates with STAR2 to form a functional transmembrane ABC transporter required for detoxification of aluminum (Al) in roots. Can specifically transport UDP-glucose. This Oryza sativa subsp. japonica (Rice) protein is UPF0014 membrane protein STAR2.